The following is a 647-amino-acid chain: Calmodulin-binding protein 60 B (647 aa).

Polar residues predominate over residues 1–10 (MMDSGNNNMN). The segment at 1–26 (MMDSGNNNMNRAKRNLDGNDDDQPER) is disordered. The segment at 8-85 (NMNRAKRNLD…TGSSGSSPKR (78 aa)) is calmodulin-binding. Residues 12–19 (AKRNLDGN) carry the Nuclear localization signal motif. A DNA-binding region spans residues 155 to 278 (EDDEDWTQEE…AFHKKLTAEG (124 aa)).

Belongs to the plant ACBP60 protein family. In terms of assembly, interacts with calmodulin (CaM). As to expression, expressed in leaves, stems, flowers, developing seeds and root.

It is found in the nucleus. Its function is as follows. Transcription activator that binds DNA in a sequence-specific manner, likely 5'-GAAATTTTGG-3', to promote the expression of target genes. The protein is Calmodulin-binding protein 60 B of Arabidopsis thaliana (Mouse-ear cress).